The chain runs to 313 residues: Probable pyridoxal 5'-phosphate synthase subunit PDX1.2 (313 aa).

A D-ribose 5-phosphate-binding site is contributed by Asp42. The Schiff-base intermediate with D-ribose 5-phosphate role is filled by Lys99. Position 171 (Gly171) interacts with D-ribose 5-phosphate. A D-glyceraldehyde 3-phosphate-binding site is contributed by Arg183. D-ribose 5-phosphate-binding positions include Gly232 and 253–254; that span reads GS.

The protein belongs to the PdxS/SNZ family.

It carries out the reaction aldehydo-D-ribose 5-phosphate + D-glyceraldehyde 3-phosphate + L-glutamine = pyridoxal 5'-phosphate + L-glutamate + phosphate + 3 H2O + H(+). Its pathway is cofactor biosynthesis; pyridoxal 5'-phosphate biosynthesis. Catalyzes the formation of pyridoxal 5'-phosphate from ribose 5-phosphate (RBP), glyceraldehyde 3-phosphate (G3P) and ammonia. The ammonia is provided by PDX2. Can also use ribulose 5-phosphate and dihydroxyacetone phosphate as substrates, resulting from enzyme-catalyzed isomerization of RBP and G3P, respectively. Also plays an indirect role in resistance to singlet oxygen-generating photosensitizers. In Oryza sativa subsp. japonica (Rice), this protein is Probable pyridoxal 5'-phosphate synthase subunit PDX1.2 (PDX12).